An 847-amino-acid polypeptide reads, in one-letter code: Alanine--tRNA ligase (847 aa).

Positions 554, 558, 656, and 660 each coordinate Zn(2+).

Belongs to the class-II aminoacyl-tRNA synthetase family. Zn(2+) is required as a cofactor.

Its subcellular location is the cytoplasm. The catalysed reaction is tRNA(Ala) + L-alanine + ATP = L-alanyl-tRNA(Ala) + AMP + diphosphate. Functionally, catalyzes the attachment of alanine to tRNA(Ala) in a two-step reaction: alanine is first activated by ATP to form Ala-AMP and then transferred to the acceptor end of tRNA(Ala). Also edits incorrectly charged Ser-tRNA(Ala) and Gly-tRNA(Ala) via its editing domain. The sequence is that of Alanine--tRNA ligase from Helicobacter pylori (strain Shi470).